The chain runs to 481 residues: Glutamyl-tRNA(Gln) amidotransferase subunit A (481 aa).

Active-site charge relay system residues include Lys74 and Ser149. Ser173 acts as the Acyl-ester intermediate in catalysis.

Belongs to the amidase family. GatA subfamily. Heterotrimer of A, B and C subunits.

It carries out the reaction L-glutamyl-tRNA(Gln) + L-glutamine + ATP + H2O = L-glutaminyl-tRNA(Gln) + L-glutamate + ADP + phosphate + H(+). Allows the formation of correctly charged Gln-tRNA(Gln) through the transamidation of misacylated Glu-tRNA(Gln) in organisms which lack glutaminyl-tRNA synthetase. The reaction takes place in the presence of glutamine and ATP through an activated gamma-phospho-Glu-tRNA(Gln). The sequence is that of Glutamyl-tRNA(Gln) amidotransferase subunit A from Francisella tularensis subsp. holarctica (strain FTNF002-00 / FTA).